A 178-amino-acid polypeptide reads, in one-letter code: Cytidylate kinase (178 aa).

7–15 (GLPGSGTTS) contacts ATP.

The protein belongs to the cytidylate kinase family. Type 2 subfamily.

It is found in the cytoplasm. It carries out the reaction CMP + ATP = CDP + ADP. The enzyme catalyses dCMP + ATP = dCDP + ADP. In Methanospirillum hungatei JF-1 (strain ATCC 27890 / DSM 864 / NBRC 100397 / JF-1), this protein is Cytidylate kinase.